We begin with the raw amino-acid sequence, 690 residues long: Eukaryotic translation initiation factor 3 subunit B (690 aa).

The segment covering 1–11 (MAKKKSEEHSG) has biased composition (basic and acidic residues). The disordered stretch occupies residues 1-36 (MAKKKSEEHSGADANDSDYTEEPNFDDPPNFVDNIS). The segment covering 15 to 25 (NDSDYTEEPNF) has biased composition (acidic residues). Residues 57–141 (SVVVVDNMPK…YTFAVNLFTD (85 aa)) form the RRM domain. WD repeat units lie at residues 207 to 246 (TRER…KIQK), 292 to 331 (GDGM…LLDL), 334 to 369 (IKIP…TLME), 442 to 484 (EIRE…KPSL), and 530 to 575 (PDHF…IRRT). The stretch at 614-645 (QKDRLRLTRASKELLEKRSQLRETFMEYRNKR) forms a coiled coil.

Belongs to the eIF-3 subunit B family. Component of the eukaryotic translation initiation factor 3 (eIF-3) complex. The eIF-3 complex interacts with pix. Interacts with mxt.

The protein resides in the cytoplasm. Functionally, RNA-binding component of the eukaryotic translation initiation factor 3 (eIF-3) complex, which is involved in protein synthesis of a specialized repertoire of mRNAs and, together with other initiation factors, stimulates binding of mRNA and methionyl-tRNAi to the 40S ribosome. The eIF-3 complex specifically targets and initiates translation of a subset of mRNAs involved in cell proliferation. This is Eukaryotic translation initiation factor 3 subunit B from Drosophila virilis (Fruit fly).